The sequence spans 146 residues: Basic phospholipase A2 (146 aa).

The N-terminal stretch at M1–S21 is a signal peptide. Positions V22–L27 are excised as a propeptide. Cystine bridges form between C38-C97, C52-C145, C54-C70, C69-C127, C76-C120, C86-C113, and C106-C118. Ca(2+) contacts are provided by Y53, G55, and G57. The active site involves H73. Position 74 (D74) interacts with Ca(2+). N109 carries N-linked (GlcNAc...) asparagine glycosylation. Residue D121 is part of the active site.

The protein belongs to the phospholipase A2 family. Group I subfamily. D49 sub-subfamily. The cofactor is Ca(2+). Expressed by the venom gland.

The protein localises to the secreted. The catalysed reaction is a 1,2-diacyl-sn-glycero-3-phosphocholine + H2O = a 1-acyl-sn-glycero-3-phosphocholine + a fatty acid + H(+). Its function is as follows. PLA2 catalyzes the calcium-dependent hydrolysis of the 2-acyl groups in 3-sn-phosphoglycerides. This is Basic phospholipase A2 from Micrurus corallinus (Brazilian coral snake).